Here is a 309-residue protein sequence, read N- to C-terminus: Taste receptor type 2 member 113 (309 aa).

The Extracellular segment spans residues 1–10 (MVAVLQSTLP). A helical membrane pass occupies residues 11–31 (IIFSMEFIMGTLGNGFIFLIV). Topologically, residues 32–55 (CIDWVQRRKISLVDQIRTALAISR) are cytoplasmic. Residues 56-76 (IALIWLIFLDWWVSVHYPALH) traverse the membrane as a helical segment. Topologically, residues 77–80 (ETGK) are extracellular. The chain crosses the membrane as a helical span at residues 81–101 (MLSTYLISWTVINHCNFWLTA). The Cytoplasmic segment spans residues 102-127 (NLSILYFLKIANFSNIIFLYLKFRSK). Residues 128–148 (NVVLVTLLVSLFFLFLNTVII) form a helical membrane-spanning segment. The Extracellular segment spans residues 149-185 (KIFSDVCFDSVQRNVSQIFIMYNHEQICKFLSFTNPM). N162 carries N-linked (GlcNAc...) asparagine glycosylation. Residues 186 to 206 (FTFIPFVMSTVMFSLLIFSLW) traverse the membrane as a helical segment. The Cytoplasmic segment spans residues 207-229 (RHLKNMQHTAKGCRDISTTVHIR). The chain crosses the membrane as a helical span at residues 230-250 (ALQTIIVSVVLYTIFFLSFFV). At 251–262 (KVWSFVSPERYL) the chain is on the extracellular side. Residues 263–283 (IFLFVWALGNAVFSAHPFVMI) traverse the membrane as a helical segment. The Cytoplasmic portion of the chain corresponds to 284 to 309 (LVNRRLRLASLSLIFWLWYRFKNIEV).

This sequence belongs to the G-protein coupled receptor T2R family.

It is found in the membrane. Its function is as follows. Putative taste receptor which may play a role in the perception of bitterness. The polypeptide is Taste receptor type 2 member 113 (Mus musculus (Mouse)).